Reading from the N-terminus, the 112-residue chain is Nucleoid-associated protein BCI_0116 (112 aa).

Belongs to the YbaB/EbfC family. Homodimer.

Its subcellular location is the cytoplasm. The protein resides in the nucleoid. Binds to DNA and alters its conformation. May be involved in regulation of gene expression, nucleoid organization and DNA protection. In Baumannia cicadellinicola subsp. Homalodisca coagulata, this protein is Nucleoid-associated protein BCI_0116.